Reading from the N-terminus, the 107-residue chain is UPF0060 membrane protein RPD_3084 (107 aa).

Transmembrane regions (helical) follow at residues 5–25 (IIYV…WGWL), 31–51 (VWWL…LTLV), 59–79 (AYAS…WSVE), and 85–105 (RWDV…LWGP).

Belongs to the UPF0060 family.

Its subcellular location is the cell inner membrane. This is UPF0060 membrane protein RPD_3084 from Rhodopseudomonas palustris (strain BisB5).